The sequence spans 114 residues: uncharacterized protein (114 aa).

A helical membrane pass occupies residues 7-27 (YIFSFWFFFLVEYVVTFRLFL). A disordered region spans residues 90 to 114 (KNSPEKKKFKRGLPISSKYTDGKKR).

The protein resides in the membrane. This is an uncharacterized protein from Saccharomyces cerevisiae (strain ATCC 204508 / S288c) (Baker's yeast).